A 300-amino-acid polypeptide reads, in one-letter code: Probable malate dehydrogenase (300 aa).

6-12 (IGAGNVG) is a binding site for NAD(+). Positions 81 and 87 each coordinate substrate. NAD(+) contacts are provided by residues N94 and 117–119 (LTN). Substrate-binding residues include N119 and R150. H174 serves as the catalytic Proton acceptor.

This sequence belongs to the LDH/MDH superfamily.

The enzyme catalyses (S)-malate + NAD(+) = oxaloacetate + NADH + H(+). In terms of biological role, catalyzes the reversible oxidation of malate to oxaloacetate. This is Probable malate dehydrogenase (mdh) from Campylobacter jejuni subsp. jejuni serotype O:2 (strain ATCC 700819 / NCTC 11168).